The following is a 158-amino-acid chain: S-ribosylhomocysteine lyase (158 aa).

3 residues coordinate Fe cation: His-57, His-61, and Cys-125.

It belongs to the LuxS family. As to quaternary structure, homodimer. Fe cation is required as a cofactor.

It catalyses the reaction S-(5-deoxy-D-ribos-5-yl)-L-homocysteine = (S)-4,5-dihydroxypentane-2,3-dione + L-homocysteine. Involved in the synthesis of autoinducer 2 (AI-2) which is secreted by bacteria and is used to communicate both the cell density and the metabolic potential of the environment. The regulation of gene expression in response to changes in cell density is called quorum sensing. Catalyzes the transformation of S-ribosylhomocysteine (RHC) to homocysteine (HC) and 4,5-dihydroxy-2,3-pentadione (DPD). This is S-ribosylhomocysteine lyase from Deinococcus radiodurans (strain ATCC 13939 / DSM 20539 / JCM 16871 / CCUG 27074 / LMG 4051 / NBRC 15346 / NCIMB 9279 / VKM B-1422 / R1).